The primary structure comprises 612 residues: Alpha-1,3-galactosidase B (612 aa).

Positions 1 to 19 are cleaved as a signal peptide; that stretch reads MKWYLWGAVVLLYSLFGSA. The N-palmitoyl cysteine moiety is linked to residue Cys-20. Cys-20 carries the S-diacylglycerol cysteine lipid modification. PbH1 repeat units lie at residues 431-453, 454-476, and 487-536; these read TPTV…LFST, PRQT…LLCG, and CRNV…VIDA.

The protein belongs to the glycosyl hydrolase 110 family. B subfamily.

The protein localises to the cell membrane. It carries out the reaction Hydrolysis of terminal, non-reducing branched (1-&gt;3)-alpha-D-galactosidic residues, producing free D-galactose.. The enzyme catalyses Hydrolysis of terminal, non-reducing linear (1-&gt;3)-alpha-D-galactosidic residues, producing free D-galactose.. The catalysed reaction is Hydrolysis of terminal, non-reducing alpha-D-galactose residues in alpha-D-galactosides, including galactose oligosaccharides, galactomannans and galactolipids.. Functionally, alpha-galactosidase. Removes both branched alpha-1,3-linked galactose residues of blood group B antigens and linear alpha-1,3-linked galactose structures. In Parabacteroides distasonis (strain ATCC 8503 / DSM 20701 / CIP 104284 / JCM 5825 / NCTC 11152), this protein is Alpha-1,3-galactosidase B (glaB).